Consider the following 394-residue polypeptide: Aspergillopepsin-1 (394 aa).

A signal peptide spans 1 to 20; that stretch reads MVVFSKTAALVLGLSSAVSA. The propeptide at 21 to 69 is activation peptide; it reads APAPTRKGFTINQIARPANKTRTINLPGMYARSLAKFGGTVPQSVKEAA. Residues 85–391 form the Peptidase A1 domain; the sequence is YLTPVTVGKS…NSEGPKLGFA (307 aa). Active-site residues include Asp-101 and Asp-283. An intrachain disulfide couples Cys-319 to Cys-354.

It belongs to the peptidase A1 family. Monomer.

The protein localises to the secreted. It catalyses the reaction Hydrolysis of proteins with broad specificity. Generally favors hydrophobic residues in P1 and P1', but also accepts Lys in P1, which leads to activation of trypsinogen. Does not clot milk.. In terms of biological role, secreted aspartic endopeptidase that allows assimilation of proteinaceous substrates. The scissile peptide bond is attacked by a nucleophilic water molecule activated by two aspartic residues in the active site. Shows a broad primary substrate specificity. Favors hydrophobic residues at the P1 and P1' positions, but also accepts a lysine residue in the P1 position, leading to the activation of trypsinogen and chymotrypsinogen A. In Aspergillus niger (strain ATCC MYA-4892 / CBS 513.88 / FGSC A1513), this protein is Aspergillopepsin-1 (pepA).